Reading from the N-terminus, the 550-residue chain is Glucose-6-phosphate isomerase (550 aa).

Catalysis depends on Glu-356, which acts as the Proton donor. Active-site residues include His-387 and Lys-515.

This sequence belongs to the GPI family.

The protein resides in the cytoplasm. It catalyses the reaction alpha-D-glucose 6-phosphate = beta-D-fructose 6-phosphate. Its pathway is carbohydrate biosynthesis; gluconeogenesis. It participates in carbohydrate degradation; glycolysis; D-glyceraldehyde 3-phosphate and glycerone phosphate from D-glucose: step 2/4. Catalyzes the reversible isomerization of glucose-6-phosphate to fructose-6-phosphate. The protein is Glucose-6-phosphate isomerase of Aliivibrio salmonicida (strain LFI1238) (Vibrio salmonicida (strain LFI1238)).